The chain runs to 83 residues: Pigment-dispersing hormone peptides (83 aa).

The first 24 residues, 1–24 (MRFIILGVLFIAVASMILSNGVMA), serve as a signal peptide directing secretion. The residue at position 80 (Ala-80) is an Alanine amide.

It belongs to the arthropod PDH family. As to expression, strongly expressed in eyestalk tissue and cerebral ganglia (at protein level).

The protein localises to the secreted. In terms of biological role, the pigment-dispersing hormone causes the migration of the distal retinal pigment into the proximal end of the pigment chromatophore cells and thus decreases the amount of light entering the retinulas. May also function as a neurotransmitter and/or neuromodulator. The polypeptide is Pigment-dispersing hormone peptides (Eurydice pulchra (Speckled sea louse)).